The primary structure comprises 764 residues: Complement factor B (764 aa).

The signal sequence occupies residues 1–25 (MGSNLSPQLCLMPFILGLLSGGVTT). Sushi domains lie at 35–100 (GSCS…ECRA), 101–160 (IHCP…ICDN), and 163–220 (GYCS…SCQD). Intrachain disulfides connect cysteine 37–cysteine 76, cysteine 62–cysteine 98, cysteine 103–cysteine 145, cysteine 131–cysteine 158, cysteine 165–cysteine 205, and cysteine 191–cysteine 218. N-linked (GlcNAc...) asparagine glycans are attached at residues asparagine 122 and asparagine 142. The VWFA domain occupies 270-469 (NIYLVLDGSD…NLEDVFYQMI (200 aa)). Positions 278 and 280 each coordinate Mg(2+). An N-linked (GlcNAc...) asparagine glycan is attached at asparagine 285. Threonine 353 contacts Mg(2+). A glycan (N-linked (GlcNAc...) asparagine) is linked at asparagine 378. Positions 477-757 (LCGMVWEHRK…VLPWLKEKLQ (281 aa)) constitute a Peptidase S1 domain. Intrachain disulfides connect cysteine 478/cysteine 596, cysteine 511/cysteine 527, cysteine 599/cysteine 615, cysteine 656/cysteine 682, and cysteine 695/cysteine 725. Catalysis depends on charge relay system residues histidine 526 and aspartate 576. Serine 699 functions as the Charge relay system in the catalytic mechanism.

The protein belongs to the peptidase S1 family. As to quaternary structure, monomer. Interacts with complement C3b; this interaction is dependent on the presence of Mg(2+). Catalytic component of the C3 convertase of the alternative complement pathway, also named C3bBb, composed of complement factor B Bb and complement C3b. Catalytic component of the C5 convertase of the alternative complement pathway, also named C3bBb3b, composed of complement factor B Bb and additional molecules of complement C3b. Interacts to CFP; this interaction contributes to the stabilization of the active C3-convertase enzyme complex. Mg(2+) serves as cofactor. Mn(2+) is required as a cofactor. Post-translationally, cleaved by CFD following activation of the alternative complement system, generating Ba and Bb chains. Cleavage and activation takes place when CFB is already associated with complement C3b.

It is found in the secreted. It localises to the cell surface. It catalyses the reaction Cleavage of Arg-|-Ser bond in complement component C3 alpha-chain to yield C3a and C3b, and Arg-|-Xaa bond in complement component C5 alpha-chain to yield C5a and C5b.. Its function is as follows. Precursor of the catalytic component of the C3 and C5 convertase complexes of the alternative pathway of the complement system, a cascade of proteins that leads to phagocytosis and breakdown of pathogens and signaling that strengthens the adaptive immune system. The alternative complement pathway acts as an amplification loop that enhances other complement pathways (classical, lectin and GZMK) by promoting formation of additional C3 and C5 convertases. CFB is cleaved and activated by CFD to generate Ba and Bb chains; Bb chain constituting the catalytic component of the C3 and C5 convertases. Serine protease component of the complement C3 and C5 convertase complexes of the alternative complement pathway. Following cleavage and activation by factor D (CFD), forms the C3 convertase together with complement C3b. As part of the C3 convertase, cleaves and activates C3 into C3a anaphylatoxin and C3b opsonin, the next components of the complement pathways. When an additional complement C3b molecule binds to the C3 convertase, forms the C5 convertase, which cleaves and activates C5 into C5a anaphylatoxin and C5b component of the membrane attack complex. In terms of biological role, involved in proliferation and differentiation of preactivated B-lymphocytes, rapid spreading of peripheral blood monocytes, stimulation of lymphocyte blastogenesis and lysis of erythrocytes. This is Complement factor B (CFB) from Gorilla gorilla gorilla (Western lowland gorilla).